Consider the following 173-residue polypeptide: Photosystem I assembly protein Ycf3 (173 aa).

TPR repeat units lie at residues 35–68 (AYVYYRDGLSAQNAGDYAEALENYEESLKLEESP), 72–105 (SETLKNMAIIYMSNGDEDLALDTYQRALDQNSNQ), and 120–153 (GRTAQEAGLQDEADQLFDRAADVWTQAVRLYPGG).

Belongs to the Ycf3 family.

Its subcellular location is the cellular thylakoid membrane. In terms of biological role, essential for the assembly of the photosystem I (PSI) complex. May act as a chaperone-like factor to guide the assembly of the PSI subunits. In Prochlorococcus marinus (strain MIT 9303), this protein is Photosystem I assembly protein Ycf3.